The chain runs to 392 residues: Heat-inducible transcription repressor HrcA (392 aa).

It belongs to the HrcA family.

Negative regulator of class I heat shock genes (grpE-dnaK-dnaJ and groELS operons). Prevents heat-shock induction of these operons. This is Heat-inducible transcription repressor HrcA from Chlamydia trachomatis serovar A (strain ATCC VR-571B / DSM 19440 / HAR-13).